A 257-amino-acid polypeptide reads, in one-letter code: Zinc import ATP-binding protein ZnuC (257 aa).

One can recognise an ABC transporter domain in the interval 6 to 221 (IRLDQVGVTF…PAFVELFGKT (216 aa)). 38–45 (GPNGAGKT) contacts ATP.

Belongs to the ABC transporter superfamily. Zinc importer (TC 3.A.1.15.5) family. In terms of assembly, the complex is composed of two ATP-binding proteins (ZnuC), two transmembrane proteins (ZnuB) and a solute-binding protein (ZnuA).

It localises to the cell inner membrane. The catalysed reaction is Zn(2+)(out) + ATP(in) + H2O(in) = Zn(2+)(in) + ADP(in) + phosphate(in) + H(+)(in). In terms of biological role, part of the ABC transporter complex ZnuABC involved in zinc import. Responsible for energy coupling to the transport system. The polypeptide is Zinc import ATP-binding protein ZnuC (Pseudomonas putida (strain ATCC 47054 / DSM 6125 / CFBP 8728 / NCIMB 11950 / KT2440)).